The primary structure comprises 152 residues: Xanthine-guanine phosphoribosyltransferase (152 aa).

5-phospho-alpha-D-ribose 1-diphosphate-binding positions include 37–38, Arg-69, and 88–96; these read RG and DDLVDTGGT. GMP is bound at residue Arg-69. Asp-89 is a binding site for Mg(2+). Guanine contacts are provided by Asp-92 and Ile-135. Xanthine contacts are provided by Asp-92 and Ile-135. GMP contacts are provided by residues 92–96 and 134–135; these read DTGGT and WI.

The protein belongs to the purine/pyrimidine phosphoribosyltransferase family. XGPT subfamily. Homotetramer. Mg(2+) is required as a cofactor.

The protein localises to the cell inner membrane. The enzyme catalyses GMP + diphosphate = guanine + 5-phospho-alpha-D-ribose 1-diphosphate. It catalyses the reaction XMP + diphosphate = xanthine + 5-phospho-alpha-D-ribose 1-diphosphate. It carries out the reaction IMP + diphosphate = hypoxanthine + 5-phospho-alpha-D-ribose 1-diphosphate. It functions in the pathway purine metabolism; GMP biosynthesis via salvage pathway; GMP from guanine: step 1/1. Its pathway is purine metabolism; XMP biosynthesis via salvage pathway; XMP from xanthine: step 1/1. Its function is as follows. Purine salvage pathway enzyme that catalyzes the transfer of the ribosyl-5-phosphate group from 5-phospho-alpha-D-ribose 1-diphosphate (PRPP) to the N9 position of the 6-oxopurines guanine and xanthine to form the corresponding ribonucleotides GMP (guanosine 5'-monophosphate) and XMP (xanthosine 5'-monophosphate), with the release of PPi. To a lesser extent, also acts on hypoxanthine. The sequence is that of Xanthine-guanine phosphoribosyltransferase from Citrobacter koseri (strain ATCC BAA-895 / CDC 4225-83 / SGSC4696).